Reading from the N-terminus, the 250-residue chain is Mediator of RNA polymerase II transcription subunit 6 (250 aa).

The segment at 166 to 250 (KKREEEKKED…EPTARTTSKQ (85 aa)) is disordered. The span at 204–223 (PAEDALEREEKEEVEEEEEE) shows a compositional bias: acidic residues. Basic and acidic residues predominate over residues 224 to 239 (TLKTEEPTTSTDEPKF).

It belongs to the Mediator complex subunit 6 family. Component of the Mediator complex. Interacts with let-19/mdt-13. Interacts with RNA polymerase II. Interacts with mdt-28.

It localises to the nucleus. Component of the Mediator complex, a coactivator involved in the regulated transcription of nearly all RNA polymerase II-dependent genes. Mediator functions as a bridge to convey information from gene-specific regulatory proteins to the basal RNA polymerase II transcription machinery. Mediator is recruited to promoters by direct interactions with regulatory proteins and serves as a scaffold for the assembly of a functional preinitiation complex with RNA polymerase II and the general transcription factors. Acts to repress beta-catenin target genes. Required for asymmetric division of T-cells and for gonad and germ cell development. This chain is Mediator of RNA polymerase II transcription subunit 6 (mdt-6), found in Caenorhabditis elegans.